Consider the following 436-residue polypeptide: Chromosomal replication initiator protein DnaA (436 aa).

Residues 1 to 69 (MLADEILELL…AYLYEVKTGK (69 aa)) form a domain I, interacts with DnaA modulators region. Residues 69–99 (KKPEVEITSQTKLKNIKQNQVNVKQIKAQSS) are domain II. The interval 100-314 (ILNPGYTFEN…GAIINLNAYA (215 aa)) is domain III, AAA+ region. The ATP site is built by glycine 144, glycine 146, lysine 147, and threonine 148. The segment at 315 to 436 (SLMRVEITLE…EIKNKILTKG (122 aa)) is domain IV, binds dsDNA.

The protein belongs to the DnaA family. As to quaternary structure, oligomerizes as a right-handed, spiral filament on DNA at oriC.

The protein resides in the cytoplasm. In terms of biological role, plays an essential role in the initiation and regulation of chromosomal replication. ATP-DnaA binds to the origin of replication (oriC) to initiate formation of the DNA replication initiation complex once per cell cycle. Binds the DnaA box (a 9 base pair repeat at the origin) and separates the double-stranded (ds)DNA. Forms a right-handed helical filament on oriC DNA; dsDNA binds to the exterior of the filament while single-stranded (ss)DNA is stabiized in the filament's interior. The ATP-DnaA-oriC complex binds and stabilizes one strand of the AT-rich DNA unwinding element (DUE), permitting loading of DNA polymerase. After initiation quickly degrades to an ADP-DnaA complex that is not apt for DNA replication. Binds acidic phospholipids. The polypeptide is Chromosomal replication initiator protein DnaA (Campylobacter concisus (strain 13826)).